The sequence spans 168 residues: Photosystem I assembly protein Ycf3 (168 aa).

3 TPR repeats span residues 35 to 68, 72 to 105, and 120 to 153; these read AFTY…EIDP, SYIL…NPFL, and GEQA…TPGN.

It belongs to the Ycf3 family.

Its subcellular location is the plastid. It localises to the chloroplast thylakoid membrane. Its function is as follows. Essential for the assembly of the photosystem I (PSI) complex. May act as a chaperone-like factor to guide the assembly of the PSI subunits. The chain is Photosystem I assembly protein Ycf3 from Ipomoea purpurea (Common morning glory).